The sequence spans 556 residues: Phenylalanine--tRNA ligase beta subunit (556 aa).

The 76-residue stretch at 278 to 353 (LTPKRFEVEL…IAYGYNNIEP (76 aa)) folds into the B5 domain. Mg(2+) is bound by residues Asp331, Asp337, Glu340, and Asp341.

Belongs to the phenylalanyl-tRNA synthetase beta subunit family. Type 2 subfamily. Tetramer of two alpha and two beta subunits. Mg(2+) is required as a cofactor.

It localises to the cytoplasm. The enzyme catalyses tRNA(Phe) + L-phenylalanine + ATP = L-phenylalanyl-tRNA(Phe) + AMP + diphosphate + H(+). This is Phenylalanine--tRNA ligase beta subunit from Pyrococcus abyssi (strain GE5 / Orsay).